Consider the following 380-residue polypeptide: Cytochrome b (380 aa).

Helical transmembrane passes span phenylalanine 34–methionine 54, tryptophan 78–isoleucine 99, tryptophan 114–leucine 134, and phenylalanine 179–threonine 199. Positions 84 and 98 each coordinate heme b. Histidine 183 and histidine 197 together coordinate heme b. Histidine 202 lines the a ubiquinone pocket. The next 4 helical transmembrane spans lie at isoleucine 227–serine 247, leucine 289–histidine 309, leucine 321–serine 341, and phenylalanine 348–proline 368.

The protein belongs to the cytochrome b family. As to quaternary structure, the cytochrome bc1 complex contains 11 subunits: 3 respiratory subunits (MT-CYB, CYC1 and UQCRFS1), 2 core proteins (UQCRC1 and UQCRC2) and 6 low-molecular weight proteins (UQCRH/QCR6, UQCRB/QCR7, UQCRQ/QCR8, UQCR10/QCR9, UQCR11/QCR10 and a cleavage product of UQCRFS1). This cytochrome bc1 complex then forms a dimer. It depends on heme b as a cofactor.

The protein localises to the mitochondrion inner membrane. In terms of biological role, component of the ubiquinol-cytochrome c reductase complex (complex III or cytochrome b-c1 complex) that is part of the mitochondrial respiratory chain. The b-c1 complex mediates electron transfer from ubiquinol to cytochrome c. Contributes to the generation of a proton gradient across the mitochondrial membrane that is then used for ATP synthesis. The sequence is that of Cytochrome b (MT-CYB) from Alectoris graeca (Rock partridge).